Consider the following 269-residue polypeptide: Type II restriction enzyme SfiI (269 aa).

The catalysed reaction is Endonucleolytic cleavage of DNA to give specific double-stranded fragments with terminal 5'-phosphates.. Functionally, an F and P subtype restriction enzyme that recognizes the double-stranded sequence 5'-GGCCN(5)GGCC-3' and cleaves before N-9. In Streptomyces fimbriatus, this protein is Type II restriction enzyme SfiI (sfiIR).